The chain runs to 285 residues: Dermonecrotic toxin LlSicTox-alphaIII2 (285 aa).

The active site involves His-12. The Mg(2+) site is built by Glu-32 and Asp-34. The active-site Nucleophile is His-47. Cys-51 and Cys-57 are oxidised to a cystine. Asp-91 contributes to the Mg(2+) binding site.

Belongs to the arthropod phospholipase D family. Class I subfamily. Requires Mg(2+) as cofactor. As to expression, expressed by the venom gland.

The protein localises to the secreted. It carries out the reaction an N-(acyl)-sphingosylphosphocholine = an N-(acyl)-sphingosyl-1,3-cyclic phosphate + choline. The catalysed reaction is an N-(acyl)-sphingosylphosphoethanolamine = an N-(acyl)-sphingosyl-1,3-cyclic phosphate + ethanolamine. It catalyses the reaction a 1-acyl-sn-glycero-3-phosphocholine = a 1-acyl-sn-glycero-2,3-cyclic phosphate + choline. The enzyme catalyses a 1-acyl-sn-glycero-3-phosphoethanolamine = a 1-acyl-sn-glycero-2,3-cyclic phosphate + ethanolamine. In terms of biological role, dermonecrotic toxins cleave the phosphodiester linkage between the phosphate and headgroup of certain phospholipids (sphingolipid and lysolipid substrates), forming an alcohol (often choline) and a cyclic phosphate. This toxin acts on sphingomyelin (SM) (228.2 U/mg). It may also act on ceramide phosphoethanolamine (CPE), lysophosphatidylcholine (LPC) and lysophosphatidylethanolamine (LPE), but not on lysophosphatidylserine (LPS), and lysophosphatidylglycerol (LPG). It acts by transphosphatidylation, releasing exclusively cyclic phosphate products as second products. Induces dermonecrosis, hemolysis, increased vascular permeability, edema, inflammatory response, and platelet aggregation. Is lethal to mice. In Loxosceles laeta (South American recluse spider), this protein is Dermonecrotic toxin LlSicTox-alphaIII2.